The primary structure comprises 503 residues: 2-isopropylmalate synthase (503 aa).

The Mn(2+) site is built by Asp1, His189, His191, and Asn225. In terms of domain architecture, Pyruvate carboxyltransferase spans 1-254 (DGEQALQASL…STNINHKEIY (254 aa)). The segment at 379–503 (SLKFFSVQSI…NKNLKNLKKQ (125 aa)) is regulatory domain.

The protein belongs to the alpha-IPM synthase/homocitrate synthase family. LeuA type 1 subfamily. In terms of assembly, homodimer. It depends on Mn(2+) as a cofactor.

Its subcellular location is the cytoplasm. The catalysed reaction is 3-methyl-2-oxobutanoate + acetyl-CoA + H2O = (2S)-2-isopropylmalate + CoA + H(+). Its pathway is amino-acid biosynthesis; L-leucine biosynthesis; L-leucine from 3-methyl-2-oxobutanoate: step 1/4. Catalyzes the condensation of the acetyl group of acetyl-CoA with 3-methyl-2-oxobutanoate (2-ketoisovalerate) to form 3-carboxy-3-hydroxy-4-methylpentanoate (2-isopropylmalate). This Buchnera aphidicola subsp. Uroleucon ambrosiae protein is 2-isopropylmalate synthase.